The following is a 396-amino-acid chain: Flap endonuclease 1 (396 aa).

The segment at Met-1–Lys-104 is N-domain. Mg(2+) is bound at residue Asp-34. Positions 47 and 70 each coordinate DNA. Mg(2+) is bound by residues Asp-86, Glu-158, Glu-160, Asp-179, and Asp-181. The segment at Asp-122 to His-255 is I-domain. Glu-158 contributes to the DNA binding site. DNA is bound by residues Gly-233 and Asp-235. Asp-235 lines the Mg(2+) pocket. The interval Met-338 to Gly-396 is disordered. Positions Gln-342–Phe-350 are interaction with PCNA. The segment covering Pro-352 to Ala-384 has biased composition (basic and acidic residues). Positions Lys-385–Gly-396 are enriched in basic residues.

The protein belongs to the XPG/RAD2 endonuclease family. FEN1 subfamily. In terms of assembly, interacts with PCNA. Three molecules of FEN1 bind to one PCNA trimer with each molecule binding to one PCNA monomer. PCNA stimulates the nuclease activity without altering cleavage specificity. It depends on Mg(2+) as a cofactor. In terms of processing, phosphorylated. Phosphorylation upon DNA damage induces relocalization to the nuclear plasma.

The protein resides in the nucleus. Its subcellular location is the nucleolus. It localises to the nucleoplasm. It is found in the mitochondrion. Structure-specific nuclease with 5'-flap endonuclease and 5'-3' exonuclease activities involved in DNA replication and repair. During DNA replication, cleaves the 5'-overhanging flap structure that is generated by displacement synthesis when DNA polymerase encounters the 5'-end of a downstream Okazaki fragment. It enters the flap from the 5'-end and then tracks to cleave the flap base, leaving a nick for ligation. Also involved in the long patch base excision repair (LP-BER) pathway, by cleaving within the apurinic/apyrimidinic (AP) site-terminated flap. Acts as a genome stabilization factor that prevents flaps from equilibrating into structures that lead to duplications and deletions. Also possesses 5'-3' exonuclease activity on nicked or gapped double-stranded DNA, and exhibits RNase H activity. Also involved in replication and repair of rDNA and in repairing mitochondrial DNA. This is Flap endonuclease 1 from Phaeosphaeria nodorum (strain SN15 / ATCC MYA-4574 / FGSC 10173) (Glume blotch fungus).